The chain runs to 455 residues: ATP-dependent protease ATPase subunit HslU (455 aa).

Residues I19 and 61–66 (GVGKTE) contribute to the ATP site. Positions 144–163 (ESKVGFANEPAEDAASKKEK) are disordered. ATP is bound by residues D268, E333, and R405.

Belongs to the ClpX chaperone family. HslU subfamily. As to quaternary structure, a double ring-shaped homohexamer of HslV is capped on each side by a ring-shaped HslU homohexamer. The assembly of the HslU/HslV complex is dependent on binding of ATP.

It is found in the cytoplasm. In terms of biological role, ATPase subunit of a proteasome-like degradation complex; this subunit has chaperone activity. The binding of ATP and its subsequent hydrolysis by HslU are essential for unfolding of protein substrates subsequently hydrolyzed by HslV. HslU recognizes the N-terminal part of its protein substrates and unfolds these before they are guided to HslV for hydrolysis. This is ATP-dependent protease ATPase subunit HslU from Francisella tularensis subsp. holarctica (strain FTNF002-00 / FTA).